Here is a 1556-residue protein sequence, read N- to C-terminus: MASELGARDDGGCTELAKPLYLQYLERALRLDHFLRQTSAIFNRNISSDDSEDGLDDSNPLLPQSGDPLIQVKEEPPNSLLGETSGAGSSGMLNTYSLNGVLQSESKCDKGNLYNFSKLKKSRKWLKSILLSDESSEADSQSEDDDEEELNLSREELHNMLRLHKYKKLHQNKYSKDKELQQYQYYSAGLLSTYDPFYEQQRHLLGPKKKKFKEEKKLKAKLKKVKKKRRRDEELSSEESPRRHHHQTKVFAKFSHDAPPPGTKKKHLSIEQLNARRRKVWLSIVKKELPKANKQKASARNLFLTNSRKLAHQCMKEVRRAALQAQKNCKETLPRARRLTKEMLLYWKKYEKVEKEHRKRAEKEALEQRKLDEEMREAKRQQRKLNFLITQTELYAHFMSRKRDMGHDGIQEEILRKLEDSSTQRQIDIGGGVVVNITQEDYDSNHFKAQALKNAENAYHIHQARTRSFDEDAKESRAAALRAANKSGTGFGESYSLANPSIRAGEDIPQPTIFNGKLKGYQLKGMNWLANLYEQGINGILADEMGLGKTVQSIALLAHLAERENIWGPFLIISPASTLNNWHQEFTRFVPKFKVLPYWGNPHDRKVIRRFWSQKTLYTQDAPFHVVITSYQLVVQDVKYFQRVKWQYMVLDEAQALKSSSSVRWKILLQFQCRNRLLLTGTPIQNTMAELWALLHFIMPTLFDSHEEFNEWFSKDIESHAENKSAIDENQLSRLHMILKPFMLRRIKKDVENELSDKIEILMYCQLTSRQKLLYQALKNKISIEDLLQSSMGSTQQAQNTTSSLMNLVMQFRKVCNHPELFERQETWSPFHISLKPYHISKFIYRHGQIRVFNHSRDRWLRVLSPFAPDYIQRSLFHRKGINEESCFSFLRFIDISPAEMANLMLQGLLARWLALFLSLKASYRLHQLRSWGAPEGESHQRYLRNKDFLLGVNFPLSFPNLCSCPLLKSLVFSSHCKAVSGYSDQVVHQRRSATSSLRRCLLTELPSFLCVASPRVTAVPLDSYCNDRSAEYERRVLKEGGSLAAKQCLLNGAPELAADWLNRRSQFFPEPAGGLWSIRPQNGWSFIRIPGKESLITDSGKLYALDVLLTRLKSQGHRVLIYSQMTRMIDLLEEYMVYRKHTYMRLDGSSKISERRDMVADFQNRNDIFVFLLSTRAGGLGINLTAADTVIFYDSDWNPTVDQQAMDRAHRLGQTKQVTVYRLICKGTIEERILQRAKEKSEIQRMVISGGNFKPDTLKPKEVVSLLLDDEELEKKLRLRQEEKRQQEETNRVKERKRKREKYAEKKKKEDELDGKRRKEGVNLVIPFVPSADNSNLSADGDDSFISVDSAMPSPFSEISISSELHTGSIPLDESSSDMLVIVDDPASSAPQSRATNSPASITGSVSDTVNGISIQEMPAAGRGHSARSRGRPKGSGSTAKGAGKGRSRKSTAGSAAAMAGAKAGAAAASAAAYAAYGYNVSKGISASSPLQTSLVRPAGLADFGPSSASSPLSSPLSKGNNVPGNPKNLHMTSSLAPDSLVRKQGKGTNPSGGR.

An assembles INO80 complex module with putative regulatory components INO80E, INO80F, UCHL5, NFRKB, MCRS1 and IN80D region spans residues 1–266 (MASELGARDD…DAPPPGTKKK (266 aa)). The segment at 46–87 (ISSDDSEDGLDDSNPLLPQSGDPLIQVKEEPPNSLLGETSGA) is disordered. Lysine 118 carries the post-translational modification N6-acetyllysine. The tract at residues 212–526 (FKEEKKLKAK…KLKGYQLKGM (315 aa)) is assembles INO80 complex module consisting of conserved components ACTR8, ACTL6A and YY1. Positions 219–230 (KAKLKKVKKKRR) are enriched in basic residues. Residues 219-249 (KAKLKKVKKKRRRDEELSSEESPRRHHHQTK) form a disordered region. In terms of domain architecture, DBINO spans 280–405 (VWLSIVKKEL…AHFMSRKRDM (126 aa)). The segment at 521 to 1556 (YQLKGMNWLA…GKGTNPSGGR (1036 aa)) is assembles INO80 complex module consisting of conserved components INO80B, INO80C, ACTR5, RVBL1, RVBL2. Residues 530 to 701 (ANLYEQGING…WALLHFIMPT (172 aa)) form the Helicase ATP-binding domain. An ATP-binding site is contributed by 543–550 (DEMGLGKT). One can recognise a Helicase C-terminal domain in the interval 1105 to 1260 (ALDVLLTRLK…GGNFKPDTLK (156 aa)). 2 stretches are compositionally biased toward basic and acidic residues: residues 1283–1294 (EEKRQQEETNRV) and 1303–1316 (KYAE…ELDG). 4 disordered regions span residues 1283 to 1316 (EEKR…ELDG), 1388 to 1408 (ASSA…GSVS), 1420 to 1461 (PAAG…AAMA), and 1499 to 1556 (PAGL…SGGR). Polar residues predominate over residues 1390-1408 (SAPQSRATNSPASITGSVS). Over residues 1507–1519 (PSSASSPLSSPLS) the composition is skewed to low complexity. Serine 1512 carries the phosphoserine modification.

Belongs to the SNF2/RAD54 helicase family. In terms of assembly, component of the chromatin remodeling INO80 complex; three different complex modules assemble on different domains of INO80. Interacts with DDB1. Interacts with transcriptional repressor protein YY1; the interaction recruits the INO80 complex to YY1 target genes. Interacts with YY1AP1. Interacts with tubulin alpha. (Microbial infection) Interacts with Epstein Barr virus (EBV) lytic switch protein BZLF1; this interaction participates to the activation of early lytic viral genes by BZLF1. As to expression, according to PubMed:10574462, widely expressed. According to PubMed:16298340, specifically expressed in brain, liver and pancreas.

The protein localises to the cytoplasm. It localises to the nucleus. Its subcellular location is the cytoskeleton. The protein resides in the spindle. It is found in the chromosome. The enzyme catalyses ATP + H2O = ADP + phosphate + H(+). Activated upon binding to double stranded DNA or nucleosomes. Functionally, ATPase component of the chromatin remodeling INO80 complex which is involved in transcriptional regulation, DNA replication and DNA repair. Binds DNA. As part of the INO80 complex, remodels chromatin by shifting nucleosomes. Regulates transcription upon recruitment by YY1 to YY1-activated genes, where it acts as an essential coactivator. Involved in UV-damage excision DNA repair. The contribution to DNA double-strand break repair appears to be largely indirect through transcriptional regulation. Involved in DNA replication. Required for microtubule assembly during mitosis thereby regulating chromosome segregation cycle. The sequence is that of Chromatin-remodeling ATPase INO80 (INO80) from Homo sapiens (Human).